Consider the following 700-residue polypeptide: Elongation factor G (700 aa).

Residues 10–286 (NKVRNIGIMA…AVIDYLPNPL (277 aa)) enclose the tr-type G domain. GTP is bound by residues 19-26 (AHIDAGKT), 83-87 (DTPGH), and 137-140 (NKMD).

The protein belongs to the TRAFAC class translation factor GTPase superfamily. Classic translation factor GTPase family. EF-G/EF-2 subfamily.

It localises to the cytoplasm. Functionally, catalyzes the GTP-dependent ribosomal translocation step during translation elongation. During this step, the ribosome changes from the pre-translocational (PRE) to the post-translocational (POST) state as the newly formed A-site-bound peptidyl-tRNA and P-site-bound deacylated tRNA move to the P and E sites, respectively. Catalyzes the coordinated movement of the two tRNA molecules, the mRNA and conformational changes in the ribosome. This is Elongation factor G from Rhodococcus opacus (strain B4).